We begin with the raw amino-acid sequence, 445 residues long: GTPase Der (445 aa).

EngA-type G domains are found at residues 3–167 (PVIA…YAGQ) and 180–353 (IKIA…AAAM). GTP-binding positions include 9-16 (GRPNVGKS), 56-60 (DTGGF), 119-122 (NKAE), 186-193 (GRPNVGKS), 233-237 (DTAGL), and 298-301 (NKWD). The 85-residue stretch at 354–438 (AKLPTPKLTR…PLRIEFRSSN (85 aa)) folds into the KH-like domain.

This sequence belongs to the TRAFAC class TrmE-Era-EngA-EngB-Septin-like GTPase superfamily. EngA (Der) GTPase family. In terms of assembly, associates with the 50S ribosomal subunit.

Functionally, GTPase that plays an essential role in the late steps of ribosome biogenesis. The protein is GTPase Der of Burkholderia lata (strain ATCC 17760 / DSM 23089 / LMG 22485 / NCIMB 9086 / R18194 / 383).